The sequence spans 52 residues: Troponin C, skeletal muscle (52 aa).

2 EF-hand domains span residues 2–37 (KSEE…SGEH) and 38–52 (VTDE…DGDK). Positions 15, 17, 19, 21, and 26 each coordinate Ca(2+).

The protein belongs to the troponin C family.

Its function is as follows. Troponin is the central regulatory protein of striated muscle contraction. Tn consists of three components: Tn-I which is the inhibitor of actomyosin ATPase, Tn-T which contains the binding site for tropomyosin and Tn-C. The binding of calcium to Tn-C abolishes the inhibitory action of Tn on actin filaments. The protein is Troponin C, skeletal muscle of Protopterus dolloi (Slender lungfish).